Consider the following 360-residue polypeptide: Histidinol-phosphate aminotransferase (360 aa).

K222 carries the post-translational modification N6-(pyridoxal phosphate)lysine.

This sequence belongs to the class-II pyridoxal-phosphate-dependent aminotransferase family. Histidinol-phosphate aminotransferase subfamily. As to quaternary structure, homodimer. Requires pyridoxal 5'-phosphate as cofactor.

It catalyses the reaction L-histidinol phosphate + 2-oxoglutarate = 3-(imidazol-4-yl)-2-oxopropyl phosphate + L-glutamate. Its pathway is amino-acid biosynthesis; L-histidine biosynthesis; L-histidine from 5-phospho-alpha-D-ribose 1-diphosphate: step 7/9. This Listeria monocytogenes serotype 4b (strain CLIP80459) protein is Histidinol-phosphate aminotransferase.